Reading from the N-terminus, the 105-residue chain is Large ribosomal subunit protein bL21 (105 aa).

It belongs to the bacterial ribosomal protein bL21 family. In terms of assembly, part of the 50S ribosomal subunit. Contacts protein L20.

Its function is as follows. This protein binds to 23S rRNA in the presence of protein L20. In Rickettsia typhi (strain ATCC VR-144 / Wilmington), this protein is Large ribosomal subunit protein bL21.